The sequence spans 89 residues: Small ribosomal subunit protein uS15 (89 aa).

This sequence belongs to the universal ribosomal protein uS15 family. In terms of assembly, part of the 30S ribosomal subunit. Forms a bridge to the 50S subunit in the 70S ribosome, contacting the 23S rRNA.

In terms of biological role, one of the primary rRNA binding proteins, it binds directly to 16S rRNA where it helps nucleate assembly of the platform of the 30S subunit by binding and bridging several RNA helices of the 16S rRNA. Functionally, forms an intersubunit bridge (bridge B4) with the 23S rRNA of the 50S subunit in the ribosome. This is Small ribosomal subunit protein uS15 from Leifsonia xyli subsp. xyli (strain CTCB07).